A 236-amino-acid chain; its full sequence is Dual specificity protein phosphatase 15 (236 aa).

The N-myristoyl glycine moiety is linked to residue Gly2. In terms of domain architecture, Tyrosine-protein phosphatase spans Gly4–Gln144. The active-site Phosphocysteine intermediate is the Cys88. Residues Gly178–Leu213 are disordered. Positions Thr181 to Ser194 are enriched in low complexity.

The protein belongs to the protein-tyrosine phosphatase family. Non-receptor class dual specificity subfamily.

Its subcellular location is the cell membrane. It carries out the reaction O-phospho-L-tyrosyl-[protein] + H2O = L-tyrosyl-[protein] + phosphate. The enzyme catalyses O-phospho-L-seryl-[protein] + H2O = L-seryl-[protein] + phosphate. The catalysed reaction is O-phospho-L-threonyl-[protein] + H2O = L-threonyl-[protein] + phosphate. Functionally, may play a role in the regulation of oligodendrocyte differentiation. May play a role in the regulation of myelin formation. Involved in the regulation of Erk1/2 phosphorylation in Schwann cells; the signaling may be linked to the regulation of myelination. May dephosphorylate MAPK13, ATF2, ERBB3, PDGFRB and SNX6. The sequence is that of Dual specificity protein phosphatase 15 (Dusp15) from Rattus norvegicus (Rat).